Here is an 84-residue protein sequence, read N- to C-terminus: Acyl carrier protein (84 aa).

The 76-residue stretch at 4-79 (NEIFEKVQDI…EVVDFIKSKL (76 aa)) folds into the Carrier domain. An O-(pantetheine 4'-phosphoryl)serine modification is found at Ser39.

Belongs to the acyl carrier protein (ACP) family. In terms of processing, 4'-phosphopantetheine is transferred from CoA to a specific serine of apo-ACP by AcpS. This modification is essential for activity because fatty acids are bound in thioester linkage to the sulfhydryl of the prosthetic group.

It is found in the plastid. The protein resides in the chloroplast. The protein operates within lipid metabolism; fatty acid biosynthesis. Its function is as follows. Carrier of the growing fatty acid chain in fatty acid biosynthesis. The protein is Acyl carrier protein of Porphyra purpurea (Red seaweed).